Consider the following 362-residue polypeptide: MERIVVTLGERSYPITIASGLFNEPASFLPLKSGEQVMLVTNETLAPLYLDKVRGVLEQAGVNVDSVILPDGEQYKSLAVLDTVFTALLQKPHGRDTTLVALGGGVVGDLTGFAAASYQRGVRFIQVPTTLLSQVDSSVGGKTAVNHPLGKNMIGAFYQPASVVVDLDCLKTLPPRELASGLAEVIKYGIILDGAFFNWLEENLDALLRLDGPAMAYCIRRCCELKAEVVAADERETGLRALLNLGHTFGHAIEAEMGYGNWLHGEAVAAGMVMAARTSERLGQFSSAETQRIITLLKRAGLPVNGPREMSAQAYLPHMLRDKKVLAGEIRLILPLAIGKSEVRSGVSHELVLNAIADCQSA.

NAD(+)-binding positions include 71 to 76 (DGEQYK), 105 to 109 (GVVGD), 129 to 130 (TT), lysine 142, lysine 151, and 169 to 172 (CLKT). Glutamate 184, histidine 247, and histidine 264 together coordinate Zn(2+).

The protein belongs to the sugar phosphate cyclases superfamily. Dehydroquinate synthase family. Co(2+) is required as a cofactor. Requires Zn(2+) as cofactor. NAD(+) serves as cofactor.

The protein localises to the cytoplasm. The enzyme catalyses 7-phospho-2-dehydro-3-deoxy-D-arabino-heptonate = 3-dehydroquinate + phosphate. Its pathway is metabolic intermediate biosynthesis; chorismate biosynthesis; chorismate from D-erythrose 4-phosphate and phosphoenolpyruvate: step 2/7. Catalyzes the conversion of 3-deoxy-D-arabino-heptulosonate 7-phosphate (DAHP) to dehydroquinate (DHQ). This is 3-dehydroquinate synthase from Escherichia coli (strain 55989 / EAEC).